The primary structure comprises 403 residues: Acetate kinase (403 aa).

Residue N7 participates in Mg(2+) binding. K14 serves as a coordination point for ATP. Residue R97 participates in substrate binding. D154 serves as the catalytic Proton donor/acceptor. Residues 213 to 217, 287 to 289, and 335 to 339 each bind ATP; these read HLGNG, DMR, and GIGEN. Residue E388 coordinates Mg(2+).

It belongs to the acetokinase family. Homodimer. Mg(2+) serves as cofactor. Mn(2+) is required as a cofactor.

Its subcellular location is the cytoplasm. It catalyses the reaction acetate + ATP = acetyl phosphate + ADP. It participates in metabolic intermediate biosynthesis; acetyl-CoA biosynthesis; acetyl-CoA from acetate: step 1/2. Its function is as follows. Catalyzes the formation of acetyl phosphate from acetate and ATP. Can also catalyze the reverse reaction. This chain is Acetate kinase, found in Synechococcus sp. (strain JA-2-3B'a(2-13)) (Cyanobacteria bacterium Yellowstone B-Prime).